A 223-amino-acid chain; its full sequence is Endonuclease V (223 aa).

Residues Asp-45 and Asp-113 each coordinate Mg(2+).

Belongs to the endonuclease V family. It depends on Mg(2+) as a cofactor.

Its subcellular location is the cytoplasm. The enzyme catalyses Endonucleolytic cleavage at apurinic or apyrimidinic sites to products with a 5'-phosphate.. Its function is as follows. DNA repair enzyme involved in the repair of deaminated bases. Selectively cleaves double-stranded DNA at the second phosphodiester bond 3' to a deoxyinosine leaving behind the intact lesion on the nicked DNA. The protein is Endonuclease V of Dehalococcoides mccartyi (strain CBDB1).